The primary structure comprises 174 residues: Small ribosomal subunit protein bS16 (174 aa).

The tract at residues 81 to 174 is disordered; sequence QRFTGEPAPP…DATTDATPSA (94 aa). The span at 87-97 shows a compositional bias: pro residues; the sequence is PAPPPMKTAPP. Residues 98–118 show a composition bias toward basic and acidic residues; sequence KPDKKALFEAAAKEAAGEPRA. Residues 135-158 are compositionally biased toward low complexity; it reads ETTPAAEAAPDAAASADEPAGGAS. Over residues 160–174 the composition is skewed to polar residues; that stretch reads AAESQDATTDATPSA.

The protein belongs to the bacterial ribosomal protein bS16 family.

In Acidothermus cellulolyticus (strain ATCC 43068 / DSM 8971 / 11B), this protein is Small ribosomal subunit protein bS16.